The sequence spans 239 residues: tRNA (guanine-N(7)-)-methyltransferase (239 aa).

Residues glutamate 69, glutamate 94, aspartate 121, and aspartate 144 each contribute to the S-adenosyl-L-methionine site. The active site involves aspartate 144. Residues lysine 148, aspartate 180, and 217–220 (TKFE) contribute to the substrate site.

Belongs to the class I-like SAM-binding methyltransferase superfamily. TrmB family. In terms of assembly, monomer.

The enzyme catalyses guanosine(46) in tRNA + S-adenosyl-L-methionine = N(7)-methylguanosine(46) in tRNA + S-adenosyl-L-homocysteine. The protein operates within tRNA modification; N(7)-methylguanine-tRNA biosynthesis. Functionally, catalyzes the formation of N(7)-methylguanine at position 46 (m7G46) in tRNA. The protein is tRNA (guanine-N(7)-)-methyltransferase of Buchnera aphidicola subsp. Acyrthosiphon pisum (strain Tuc7).